A 269-amino-acid chain; its full sequence is MLPYPQIDPVAVALGPLKIHWYGLMYLIGIGGAWLLASRRLNRFDPTWSREKLSDLVFWLSMGVIVGGRLGYVLFYDLHQYLANPTLIFEVWKGGMSFHGGFIGVMLAALWFGKRNNKSFFELMDFVAPLVPIGLGAGRIGNFINAELWGKATDVPWAMVFPPFSDPAQLPRHPSQLYQFALEGVALFVILWLYSRKPRPTMAVSGMFALFYGIFRFIVEFVRVPDAQLGYIAFGWLTMGQLLCVPMIVGGIFLIWLAYNRKPTAKATV.

7 helical membrane-spanning segments follow: residues 17–37 (LKIHWYGLMYLIGIGGAWLLA), 56–76 (LVFWLSMGVIVGGRLGYVLFY), 92–112 (WKGGMSFHGGFIGVMLAALWF), 120–140 (FFELMDFVAPLVPIGLGAGRI), 174–194 (PSQLYQFALEGVALFVILWLY), 202–222 (MAVSGMFALFYGIFRFIVEFV), and 237–257 (LTMGQLLCVPMIVGGIFLIWL). Arginine 139 provides a ligand contact to a 1,2-diacyl-sn-glycero-3-phospho-(1'-sn-glycerol).

It belongs to the Lgt family.

The protein localises to the cell inner membrane. The enzyme catalyses L-cysteinyl-[prolipoprotein] + a 1,2-diacyl-sn-glycero-3-phospho-(1'-sn-glycerol) = an S-1,2-diacyl-sn-glyceryl-L-cysteinyl-[prolipoprotein] + sn-glycerol 1-phosphate + H(+). It functions in the pathway protein modification; lipoprotein biosynthesis (diacylglyceryl transfer). Functionally, catalyzes the transfer of the diacylglyceryl group from phosphatidylglycerol to the sulfhydryl group of the N-terminal cysteine of a prolipoprotein, the first step in the formation of mature lipoproteins. This is Phosphatidylglycerol--prolipoprotein diacylglyceryl transferase from Pseudomonas entomophila (strain L48).